Reading from the N-terminus, the 437-residue chain is Transcription factor E2F1 (437 aa).

2 disordered regions span residues 42 to 87 and 101 to 128; these read ASAP…GRPP and LAESSGPARGRGRHPGKGVKSPGEKSRY. Residues 67 to 108 form a cyclin A:CDK2 binding region; that stretch reads ATPQAPRPTPSAPRPALGRPPVKRRLDLETDHQYLAESSGPA. Positions 89–191 are interaction with BIRC2/c-IAP1; the sequence is KRRLDLETDH…KKSKNHIQWL (103 aa). The DNA-binding element occupies 110 to 194; it reads GRGRHPGKGV…KNHIQWLGSH (85 aa). Residues Lys-117, Lys-120, and Lys-125 each carry the N6-acetyllysine modification. Residues 153–174 form a leucine-zipper region; it reads LNWAAEVLKVQKRRIYDITNVL. The DEF box motif lies at 158–194; it reads EVLKVQKRRIYDITNVLEGIQLIAKKSKNHIQWLGSH. Lys-185 carries the N6-methyllysine; by SETD7 modification. The interval 192–382 is required for interaction with TRIM28; sequence GSHTTVGVGG…RLSPLVAADS (191 aa). Positions 195-284 are dimerization; it reads TTVGVGGRLE…AVDSSENFQI (90 aa). Residues 300-349 form a disordered region; it reads EETVGGISPGKTPSQEVTSEEENRATDSATIVSPPPSSPPSSLTTDPSQS. Over residues 339–349 the composition is skewed to low complexity; that stretch reads PSSLTTDPSQS. At Ser-364 the chain carries Phosphoserine; by CHEK2. The segment at 368–437 is transactivation; it reads PVDEDRLSPL…DFGDLTPLDF (70 aa). Residue Ser-375 is modified to Phosphoserine. Phosphoserine; by GSK3-beta is present on Ser-403. Positions 409–426 are RB1 binding; it reads LDYHFGLEEGEGIRDLFD. Residue Thr-433 is modified to Phosphothreonine; by GSK3-beta.

This sequence belongs to the E2F/DP family. As to quaternary structure, component of the DRTF1/E2F transcription factor complex. Forms heterodimers with DP family members. The E2F1 complex binds specifically hypophosphorylated RB1, the interaction represses E2F1-driven transcription. During the cell cycle, RB1 becomes phosphorylated in mid-to-late G1 phase, detaches from the DRTF1/E2F complex, rendering E2F transcriptionally active. Viral oncoproteins, notably E1A, T-antigen and HPV E7, are capable of sequestering RB1, thus releasing the active complex. Interacts with TRRAP, which probably mediates its interaction with histone acetyltransferase complexes, leading to transcription activation. Binds TOPBP1 and EAPP. Interacts with ARID3A. Interacts with TRIM28; the interaction inhibits E2F1 acetylation through recruiting HDAC1 and represses its transcriptional activity. Interaction with KAT2B; the interaction acetylates E2F1 enhancing its DNA-binding and transcriptional activity. Interacts with BIRC2/c-IAP1 (via BIR domains). The complex TFDP1:E2F1 interacts with CEBPA; the interaction prevents CEBPA binding to target genes promoters and represses its transcriptional activity. Interacts with RRP1B. Interacts with HCFC1. Interacts with KMT2E; the interaction is probably indirect and is mediated via HCFC1. Interacts with DCAF5 and L3MBTL3; the interaction requires methylation at Lys-185 and is necessary to target E2F1 for ubiquitination by the CRL4-DCAF5 E3 ubiquitin ligase complex. In terms of assembly, (Microbial infection) Interacts with human cytomegalovirus/HHV-5 protein UL123. Post-translationally, phosphorylated by CDK2 and cyclin A-CDK2 in the S-phase. Phosphorylation at Ser-364 by CHEK2 stabilizes E2F1 upon DNA damage and regulates its effect on transcription and apoptosis. Phosphorylation at Ser-403 by GSK3B promotes interaction with USP11, leading to its deubiquitination and stabilization. Ubiquitinated via 'Lys-63'-linked ubiquitin, leading to its degradation. Deubiquitinated by USP11 following phosphorylation by GSK3B, promoting its stability. In terms of processing, acetylation stimulates DNA-binding. Enhanced under stress conditions such as DNA damage and inhibited by retinoblastoma protein RB1. Regulated by KAP1/TRIM28 which recruits HDAC1 to E2F1 resulting in deacetylation. Acetylated by P/CAF/KAT2B. Post-translationally, methylation at Lys-185 by SETD7 promotes E2F1 ubiquitin-dependent proteasomal degradation.

It is found in the nucleus. With respect to regulation, BIRC2/c-IAP1 stimulates its transcriptional activity. Its function is as follows. Transcription activator that binds DNA cooperatively with DP proteins through the E2 recognition site, 5'-TTTC[CG]CGC-3' found in the promoter region of a number of genes whose products are involved in cell cycle regulation or in DNA replication. The DRTF1/E2F complex functions in the control of cell-cycle progression from G1 to S phase. E2F1 binds preferentially RB1 in a cell-cycle dependent manner. It can mediate both cell proliferation and TP53/p53-dependent apoptosis. Blocks adipocyte differentiation by binding to specific promoters repressing CEBPA binding to its target gene promoters. Directly activates transcription of PEG10. Positively regulates transcription of RRP1B. The protein is Transcription factor E2F1 of Homo sapiens (Human).